A 221-amino-acid polypeptide reads, in one-letter code: Large ribosomal subunit protein uL4 (221 aa).

A disordered region spans residues 46–74 (AGTASTKTRSEVSGGGRKPWPQKHTGRAR).

Belongs to the universal ribosomal protein uL4 family. As to quaternary structure, part of the 50S ribosomal subunit.

One of the primary rRNA binding proteins, this protein initially binds near the 5'-end of the 23S rRNA. It is important during the early stages of 50S assembly. It makes multiple contacts with different domains of the 23S rRNA in the assembled 50S subunit and ribosome. Functionally, forms part of the polypeptide exit tunnel. The polypeptide is Large ribosomal subunit protein uL4 (Petrotoga mobilis (strain DSM 10674 / SJ95)).